The sequence spans 145 residues: MKGLLQRVRSARVEVGTEVVGAIEQGILVLVGIEPQDTRASADKLLHKLLNYRVFSDVEGKMNLSLREVGGGLLLVSQFTLAADTKSGLRAGFSKAAPPALGAELFDYLLSQARIAHPTVAAGQFGADMQVHLINDGPVTFLFDT.

The Gly-cisPro motif, important for rejection of L-amino acids signature appears at 137–138; the sequence is GP.

This sequence belongs to the DTD family. As to quaternary structure, homodimer.

The protein localises to the cytoplasm. It catalyses the reaction glycyl-tRNA(Ala) + H2O = tRNA(Ala) + glycine + H(+). It carries out the reaction a D-aminoacyl-tRNA + H2O = a tRNA + a D-alpha-amino acid + H(+). Functionally, an aminoacyl-tRNA editing enzyme that deacylates mischarged D-aminoacyl-tRNAs. Also deacylates mischarged glycyl-tRNA(Ala), protecting cells against glycine mischarging by AlaRS. Acts via tRNA-based rather than protein-based catalysis; rejects L-amino acids rather than detecting D-amino acids in the active site. By recycling D-aminoacyl-tRNA to D-amino acids and free tRNA molecules, this enzyme counteracts the toxicity associated with the formation of D-aminoacyl-tRNA entities in vivo and helps enforce protein L-homochirality. The polypeptide is D-aminoacyl-tRNA deacylase (Pseudomonas syringae pv. syringae (strain B728a)).